We begin with the raw amino-acid sequence, 68 residues long: Kasstasin (68 aa).

Residues Met1–Ala20 form the signal peptide. A propeptide spanning residues Asp21 to Glu44 is cleaved from the precursor. A disordered region spans residues Asp22–Ala41. A Lysine amide modification is found at Lys67.

Belongs to the frog skin active peptide (FSAP) family. Brevinin subfamily. As to expression, expressed by the skin dorsal glands.

It localises to the secreted. Its function is as follows. Peptide with potent vasoconstrictor properties (EC50=25 pM). Has moderate antimicrobial activity against Gram-positive bacterium S.aureus (MIC=55 uM) and against Gram-negative bacterium E.coli (MIC=110 uM). Not active against fungus C.albicans. Has weak hemolytic activity against horse erythrocytes. This Phlyctimantis maculatus (Red-legged running frog) protein is Kasstasin.